Here is a 180-residue protein sequence, read N- to C-terminus: NADH-quinone oxidoreductase subunit I (180 aa).

2 4Fe-4S ferredoxin-type domains span residues 48-80 (IVLTRDPDGDERCVACNLCAVACPVDCISLQKA) and 90-119 (EFFRINFSRCIFCGLCEEACPTTAIQLTPD). Cys-60, Cys-63, Cys-66, Cys-70, Cys-99, Cys-102, Cys-105, and Cys-109 together coordinate [4Fe-4S] cluster.

This sequence belongs to the complex I 23 kDa subunit family. As to quaternary structure, NDH-1 is composed of 13 different subunits. Subunits NuoA, H, J, K, L, M, N constitute the membrane sector of the complex. Requires [4Fe-4S] cluster as cofactor.

It is found in the cell inner membrane. It carries out the reaction a quinone + NADH + 5 H(+)(in) = a quinol + NAD(+) + 4 H(+)(out). NDH-1 shuttles electrons from NADH, via FMN and iron-sulfur (Fe-S) centers, to quinones in the respiratory chain. The immediate electron acceptor for the enzyme in this species is believed to be ubiquinone. Couples the redox reaction to proton translocation (for every two electrons transferred, four hydrogen ions are translocated across the cytoplasmic membrane), and thus conserves the redox energy in a proton gradient. This is NADH-quinone oxidoreductase subunit I from Sodalis glossinidius (strain morsitans).